The chain runs to 249 residues: Transcription repressor MYB5 (249 aa).

2 consecutive HTH myb-type domains span residues 20–72 (KMGM…MNYL) and 73–127 (RPSV…RKKL). 2 consecutive DNA-binding regions (H-T-H motif) follow at residues 48 to 72 (WRSLPKRAGLLRCGKSCRLRWMNYL) and 100 to 123 (WSLIAGRIPGRTDNEIKNYWNTHL). The disordered stretch occupies residues 133-180 (DPQTHKPLDANNIHKPEEEVSGGQKYPLEPISSSHTDDTTVNGGDGDS). A compositionally biased stretch (basic and acidic residues) spans 135 to 150 (QTHKPLDANNIHKPEE).

In terms of assembly, interacts with BHLH002/EGL3/MYC146, BHLH012/MYC1 and BHLH042/TT8. Siliques.

It is found in the nucleus. Transcription activator, when associated with BHLH002/EGL3/MYC146, BHLH012/MYC1 or BHLH042/TT8. The polypeptide is Transcription repressor MYB5 (MYB5) (Arabidopsis thaliana (Mouse-ear cress)).